Reading from the N-terminus, the 284-residue chain is Bifunctional protein FolD (284 aa).

NADP(+) contacts are provided by residues 166–168 (GAS) and I232.

Belongs to the tetrahydrofolate dehydrogenase/cyclohydrolase family. In terms of assembly, homodimer.

It catalyses the reaction (6R)-5,10-methylene-5,6,7,8-tetrahydrofolate + NADP(+) = (6R)-5,10-methenyltetrahydrofolate + NADPH. The enzyme catalyses (6R)-5,10-methenyltetrahydrofolate + H2O = (6R)-10-formyltetrahydrofolate + H(+). It functions in the pathway one-carbon metabolism; tetrahydrofolate interconversion. In terms of biological role, catalyzes the oxidation of 5,10-methylenetetrahydrofolate to 5,10-methenyltetrahydrofolate and then the hydrolysis of 5,10-methenyltetrahydrofolate to 10-formyltetrahydrofolate. The polypeptide is Bifunctional protein FolD (Shewanella frigidimarina (strain NCIMB 400)).